Here is a 276-residue protein sequence, read N- to C-terminus: Stathmin domain-containing protein 1 (276 aa).

Disordered regions lie at residues 1–40, 61–106, and 226–250; these read MGCGPSQPAEDRRRVRAPKKGWKEEFKADVSVPHTGENCS, VQMG…RERQ, and GFEPSDLQGGKPLKRKKSKCDATLI. Glycine 2 carries N-myristoyl glycine lipidation. 2 stretches are compositionally biased toward polar residues: residues 68-78 and 87-100; these read GTISENSPSPS and DLVTNGLINKPQSL. Residues 118–244 form the SLD domain; the sequence is QGIIQSHSKV…GKPLKRKKSK (127 aa).

This chain is Stathmin domain-containing protein 1 (STMND1), found in Homo sapiens (Human).